Reading from the N-terminus, the 341-residue chain is HTH-type transcriptional repressor PurR (341 aa).

The 55-residue stretch at 2-56 (ATIKDVAKRANVSTTTVSHVINKTRFVAEETRNAVWAAIKELHYSPSAVARSLKV) folds into the HTH lacI-type domain. The segment at residues 4–23 (IKDVAKRANVSTTTVSHVIN) is a DNA-binding region (H-T-H motif). A DNA-binding region spans residues 48–56 (SAVARSLKV). Hypoxanthine is bound by residues tyrosine 73, arginine 190, threonine 192, phenylalanine 221, and aspartate 275.

As to quaternary structure, homodimer.

It participates in purine metabolism; purine nucleotide biosynthesis [regulation]. Is the main repressor of the genes involved in the de novo synthesis of purine nucleotides, regulating purB, purC, purEK, purF, purHD, purL, purMN and guaBA expression. PurR is allosterically activated to bind its cognate DNA by binding the purine corepressors, hypoxanthine or guanine, thereby effecting transcription repression. This Salmonella typhi protein is HTH-type transcriptional repressor PurR.